The sequence spans 426 residues: Enolase (426 aa).

Residue Q163 participates in (2R)-2-phosphoglycerate binding. E205 serves as the catalytic Proton donor. Mg(2+)-binding residues include D242, E283, and D310. K335, R364, S365, and K386 together coordinate (2R)-2-phosphoglycerate. K335 (proton acceptor) is an active-site residue.

It belongs to the enolase family. It depends on Mg(2+) as a cofactor.

Its subcellular location is the cytoplasm. It localises to the secreted. It is found in the cell surface. It carries out the reaction (2R)-2-phosphoglycerate = phosphoenolpyruvate + H2O. It functions in the pathway carbohydrate degradation; glycolysis; pyruvate from D-glyceraldehyde 3-phosphate: step 4/5. Its function is as follows. Catalyzes the reversible conversion of 2-phosphoglycerate (2-PG) into phosphoenolpyruvate (PEP). It is essential for the degradation of carbohydrates via glycolysis. This chain is Enolase, found in Leifsonia xyli subsp. xyli (strain CTCB07).